We begin with the raw amino-acid sequence, 158 residues long: MNKKKNAPVRKIIADNRKARFNYEILDNLEAGLVLQGAEVKSLRSNHANIAESYASFENGELWLVNSYIPEYTQANRFNHEPRRLRKLLISKREMARFFNATSREGMTLVPLKLYFNERGRAKLEIALARGKKLHDKRETEKKRDWGREKARLLKRYG.

It belongs to the SmpB family.

It localises to the cytoplasm. Required for rescue of stalled ribosomes mediated by trans-translation. Binds to transfer-messenger RNA (tmRNA), required for stable association of tmRNA with ribosomes. tmRNA and SmpB together mimic tRNA shape, replacing the anticodon stem-loop with SmpB. tmRNA is encoded by the ssrA gene; the 2 termini fold to resemble tRNA(Ala) and it encodes a 'tag peptide', a short internal open reading frame. During trans-translation Ala-aminoacylated tmRNA acts like a tRNA, entering the A-site of stalled ribosomes, displacing the stalled mRNA. The ribosome then switches to translate the ORF on the tmRNA; the nascent peptide is terminated with the 'tag peptide' encoded by the tmRNA and targeted for degradation. The ribosome is freed to recommence translation, which seems to be the essential function of trans-translation. The chain is SsrA-binding protein from Bartonella henselae (strain ATCC 49882 / DSM 28221 / CCUG 30454 / Houston 1) (Rochalimaea henselae).